We begin with the raw amino-acid sequence, 651 residues long: LEAF RUST 10 DISEASE-RESISTANCE LOCUS RECEPTOR-LIKE PROTEIN KINASE-like 1.2 (651 aa).

The signal sequence occupies residues 1-26 (MNPSTPSLLYTSIFFYFTIIATQTLS). The Extracellular segment spans residues 27–264 (LDPKFKACEP…NDKRRRVIVK (238 aa)). N-linked (GlcNAc...) asparagine glycans are attached at residues Asn-88, Asn-114, Asn-130, Asn-136, Asn-155, Asn-193, and Asn-213. The helical transmembrane segment at 265-285 (VLIGASAAVVGLIAASIFWYV) threads the bilayer. Residues 286–651 (YHRRKTKSYR…DSVIVKWDSK (366 aa)) are Cytoplasmic-facing. The region spanning 341–613 (FDPSKELGDG…PCMSHVQDTL (273 aa)) is the Protein kinase domain. ATP is bound by residues 347–355 (LGDGGFGTV) and Lys-369. Tyr-415 carries the phosphotyrosine modification. Asp-465 functions as the Proton acceptor in the catalytic mechanism. A Phosphoserine modification is found at Ser-498. Residues Thr-499 and Thr-504 each carry the phosphothreonine modification. A Phosphotyrosine modification is found at Tyr-512.

It belongs to the protein kinase superfamily. Ser/Thr protein kinase family.

The protein resides in the cell membrane. It is found in the membrane. It catalyses the reaction L-seryl-[protein] + ATP = O-phospho-L-seryl-[protein] + ADP + H(+). The enzyme catalyses L-threonyl-[protein] + ATP = O-phospho-L-threonyl-[protein] + ADP + H(+). Probable receptor-like serine/threonine-protein kinase involved in abscisic acid (ABA) signaling. Acts as a positive regulator of abiotic stress response. This Arabidopsis thaliana (Mouse-ear cress) protein is LEAF RUST 10 DISEASE-RESISTANCE LOCUS RECEPTOR-LIKE PROTEIN KINASE-like 1.2.